Reading from the N-terminus, the 196-residue chain is Large ribosomal subunit protein bL20 (196 aa).

Belongs to the bacterial ribosomal protein bL20 family.

Functionally, binds directly to 23S ribosomal RNA and is necessary for the in vitro assembly process of the 50S ribosomal subunit. It is not involved in the protein synthesizing functions of that subunit. This Oenococcus oeni (strain ATCC BAA-331 / PSU-1) protein is Large ribosomal subunit protein bL20 (rplT).